We begin with the raw amino-acid sequence, 881 residues long: Putative outer membrane usher protein YfcU (881 aa).

The signal sequence occupies residues 1–29; it reads MPDHSLFRLRILPWCIALAMSGSYSSVWA.

The protein belongs to the fimbrial export usher family.

It localises to the cell outer membrane. Its function is as follows. Part of the yfcOPQRSUV fimbrial operon. Could contribute to adhesion to various surfaces in specific environmental niches. Increases adhesion to eukaryotic T24 bladder epithelial cells in the absence of fim genes. Probably involved in the export and assembly of fimbrial subunits across the outer membrane. The polypeptide is Putative outer membrane usher protein YfcU (yfcU) (Escherichia coli (strain K12)).